Here is a 289-residue protein sequence, read N- to C-terminus: uncharacterized protein (289 aa).

A signal peptide spans 1–19 (MAKWLGAPLARGVSTATRA). Transmembrane regions (helical) follow at residues 90-110 (GLLA…GWGV) and 257-277 (AALS…LVFA).

It is found in the cell membrane. This is an uncharacterized protein from Mycobacterium tuberculosis (strain CDC 1551 / Oshkosh).